The sequence spans 390 residues: Alcohol dehydrogenase-like 7 (390 aa).

Residues Cys56, Ser58, His78, Cys108, Cys111, Cys114, Cys122, and Cys187 each coordinate Zn(2+). An alcohol is bound by residues Ser58 and His78. Ser58 lines the NAD(+) pocket. NAD(+) contacts are provided by residues 212–217 (GLGSIG), Asp236, Lys241, 306–308 (LGV), Phe334, and Arg384.

The protein belongs to the zinc-containing alcohol dehydrogenase family. Class-III subfamily. As to quaternary structure, homodimer. It depends on Zn(2+) as a cofactor.

Its subcellular location is the cytoplasm. The catalysed reaction is a primary alcohol + NAD(+) = an aldehyde + NADH + H(+). It catalyses the reaction a secondary alcohol + NAD(+) = a ketone + NADH + H(+). The chain is Alcohol dehydrogenase-like 7 from Arabidopsis thaliana (Mouse-ear cress).